Here is a 309-residue protein sequence, read N- to C-terminus: Porphobilinogen deaminase (309 aa).

Cysteine 244 carries the post-translational modification S-(dipyrrolylmethanemethyl)cysteine.

Belongs to the HMBS family. Monomer. Requires dipyrromethane as cofactor.

The catalysed reaction is 4 porphobilinogen + H2O = hydroxymethylbilane + 4 NH4(+). It participates in porphyrin-containing compound metabolism; protoporphyrin-IX biosynthesis; coproporphyrinogen-III from 5-aminolevulinate: step 2/4. Functionally, tetrapolymerization of the monopyrrole PBG into the hydroxymethylbilane pre-uroporphyrinogen in several discrete steps. The polypeptide is Porphobilinogen deaminase (Rhizobium meliloti (strain 1021) (Ensifer meliloti)).